The primary structure comprises 224 residues: Large ribosomal subunit protein bL25 (224 aa).

The disordered stretch occupies residues 195 to 224 (TVEEVDEAAEVDAADVPATEQGTDESKDGE). Acidic residues predominate over residues 197 to 207 (EEVDEAAEVDA).

The protein belongs to the bacterial ribosomal protein bL25 family. CTC subfamily. In terms of assembly, part of the 50S ribosomal subunit; part of the 5S rRNA/L5/L18/L25 subcomplex. Contacts the 5S rRNA. Binds to the 5S rRNA independently of L5 and L18.

In terms of biological role, this is one of the proteins that binds to the 5S RNA in the ribosome where it forms part of the central protuberance. This is Large ribosomal subunit protein bL25 from Psychrobacter cryohalolentis (strain ATCC BAA-1226 / DSM 17306 / VKM B-2378 / K5).